We begin with the raw amino-acid sequence, 815 residues long: Leucine--tRNA ligase (815 aa).

The 'HIGH' region motif lies at 42–52 (PYPSGRLHMGH). The short motif at 574–578 (KMSKS) is the 'KMSKS' region element. An ATP-binding site is contributed by Lys-577.

The protein belongs to the class-I aminoacyl-tRNA synthetase family.

Its subcellular location is the cytoplasm. It catalyses the reaction tRNA(Leu) + L-leucine + ATP = L-leucyl-tRNA(Leu) + AMP + diphosphate. The chain is Leucine--tRNA ligase from Alcanivorax borkumensis (strain ATCC 700651 / DSM 11573 / NCIMB 13689 / SK2).